The primary structure comprises 74 residues: Antimicrobial peptide HsAp2 (74 aa).

Positions 1-21 (MSRRLILILVLVAMLVKTMAG) are cleaved as a signal peptide. The propeptide occupies 22–33 (MESKWVETTYEI). The residue at position 65 (Pro-65) is a Proline amide. The propeptide occupies 69–74 (AISEQT).

The protein belongs to the non-disulfide-bridged peptide (NDBP) superfamily. Medium-length antimicrobial peptide (group 3) family. As to expression, expressed by the venom gland.

It localises to the secreted. Its subcellular location is the target cell membrane. In terms of biological role, possesses antimicrobial activity against both Gram-negative and Gram-positive bacteria, as well as against the fungus C.tropicalis. Also possesses a relatively high hemolytic activity. May act by disrupting the integrity of the bacterial cell membrane. The sequence is that of Antimicrobial peptide HsAp2 from Heterometrus spinifer (Asia giant forest scorpion).